The following is a 92-amino-acid chain: Small ribosomal subunit protein bS18 (92 aa).

The disordered stretch occupies residues 1–28; the sequence is MTQQGNSGERKPRGKGPKRPRKPKVDPF. Over residues 12–22 the composition is skewed to basic residues; that stretch reads PRGKGPKRPRK.

Belongs to the bacterial ribosomal protein bS18 family. Part of the 30S ribosomal subunit. Forms a tight heterodimer with protein bS6.

Functionally, binds as a heterodimer with protein bS6 to the central domain of the 16S rRNA, where it helps stabilize the platform of the 30S subunit. In Deinococcus radiodurans (strain ATCC 13939 / DSM 20539 / JCM 16871 / CCUG 27074 / LMG 4051 / NBRC 15346 / NCIMB 9279 / VKM B-1422 / R1), this protein is Small ribosomal subunit protein bS18.